A 362-amino-acid polypeptide reads, in one-letter code: Putative integrase ORF3 (362 aa).

Residues 179 to 359 (YEVKEIGLLQ…TPFNFLNSLS (181 aa)) form the Integrase catalytic domain. Residues D190 and D256 each contribute to the Mg(2+) site.

The protein belongs to the plectrovirus integrase ORF3 family.

Its function is as follows. This protein may encode an integrase, which is necessary for integration of the viral DNA into host genome. The polypeptide is Putative integrase ORF3 (Spiroplasma melliferum (SpV1)).